A 116-amino-acid chain; its full sequence is Large ribosomal subunit protein bL19 (116 aa).

This sequence belongs to the bacterial ribosomal protein bL19 family.

This protein is located at the 30S-50S ribosomal subunit interface and may play a role in the structure and function of the aminoacyl-tRNA binding site. The chain is Large ribosomal subunit protein bL19 from Clostridium botulinum (strain Eklund 17B / Type B).